We begin with the raw amino-acid sequence, 180 residues long: Putative manganese efflux pump MntP (180 aa).

5 helical membrane passes run 6–26, 33–53, 63–83, 101–121, and 130–150; these read VLLL…GLGL, MAWM…VAGW, VGRW…VKMV, GFLG…SVGF, and LLLT…AAFV.

It belongs to the MntP (TC 9.B.29) family.

The protein localises to the cell membrane. Functionally, probably functions as a manganese efflux pump. This chain is Putative manganese efflux pump MntP, found in Desulforudis audaxviator (strain MP104C).